Consider the following 246-residue polypeptide: Bis(5'-nucleosyl)-tetraphosphatase PrpE [asymmetrical] (246 aa).

It belongs to the PrpE family. Ni(2+) serves as cofactor.

It carries out the reaction P(1),P(4)-bis(5'-guanosyl) tetraphosphate + H2O = GMP + GTP + 2 H(+). In terms of biological role, asymmetrically hydrolyzes Ap4p to yield AMP and ATP. The polypeptide is Bis(5'-nucleosyl)-tetraphosphatase PrpE [asymmetrical] (Bacillus cereus (strain ATCC 10987 / NRS 248)).